The following is a 137-amino-acid chain: Fluoride-specific ion channel FluC 1 (137 aa).

Helical transmembrane passes span 4–24 (LIYI…YYLG), 37–57 (LATL…TTYI), 67–87 (VITG…TLSV), and 98–118 (WGIA…MSGL). Na(+) contacts are provided by glycine 77 and threonine 80.

Belongs to the fluoride channel Fluc/FEX (TC 1.A.43) family.

It localises to the cell membrane. The enzyme catalyses fluoride(in) = fluoride(out). With respect to regulation, na(+) is not transported, but it plays an essential structural role and its presence is essential for fluoride channel function. Functionally, fluoride-specific ion channel. Important for reducing fluoride concentration in the cell, thus reducing its toxicity. The chain is Fluoride-specific ion channel FluC 1 from Bacillus anthracis.